Here is a 257-residue protein sequence, read N- to C-terminus: NAD-capped RNA hydrolase NudC (257 aa).

K25 and R69 together coordinate substrate. C98 and C101 together coordinate Zn(2+). E111 serves as a coordination point for substrate. Zn(2+) contacts are provided by C116 and C119. Y124 lines the substrate pocket. Positions 125–248 (PQIAPCIIVA…TVARRLIEDT (124 aa)) constitute a Nudix hydrolase domain. Residues A158, E174, and E178 each contribute to the a divalent metal cation site. The Nudix box motif lies at 159 to 180 (GFVEVGETLEQAVAREVMEESG). A substrate-binding site is contributed by 192–199 (QPWPFPQS). Residue E219 participates in a divalent metal cation binding. A241 contributes to the substrate binding site.

It belongs to the Nudix hydrolase family. NudC subfamily. Homodimer. Mg(2+) serves as cofactor. It depends on Mn(2+) as a cofactor. Requires Zn(2+) as cofactor.

The enzyme catalyses a 5'-end NAD(+)-phospho-ribonucleoside in mRNA + H2O = a 5'-end phospho-adenosine-phospho-ribonucleoside in mRNA + beta-nicotinamide D-ribonucleotide + 2 H(+). It catalyses the reaction NAD(+) + H2O = beta-nicotinamide D-ribonucleotide + AMP + 2 H(+). It carries out the reaction NADH + H2O = reduced beta-nicotinamide D-ribonucleotide + AMP + 2 H(+). Its function is as follows. mRNA decapping enzyme that specifically removes the nicotinamide adenine dinucleotide (NAD) cap from a subset of mRNAs by hydrolyzing the diphosphate linkage to produce nicotinamide mononucleotide (NMN) and 5' monophosphate mRNA. The NAD-cap is present at the 5'-end of some mRNAs and stabilizes RNA against 5'-processing. Has preference for mRNAs with a 5'-end purine. Catalyzes the hydrolysis of a broad range of dinucleotide pyrophosphates. The chain is NAD-capped RNA hydrolase NudC from Escherichia coli O7:K1 (strain IAI39 / ExPEC).